Here is a 590-residue protein sequence, read N- to C-terminus: ATP-dependent lipid A-core flippase (590 aa).

Transmembrane regions (helical) follow at residues 31 to 51, 74 to 94, 132 to 152, 159 to 179, 259 to 279, and 286 to 306; these read IFIA…VIPK, AILT…GYLL, AVIF…ITLV, VALL…VSVI, VTAF…MIQA, and IGGF…LKHL. In terms of domain architecture, ABC transmembrane type-1 spans 33 to 315; the sequence is IAAILAMAVV…LTDINQPLTR (283 aa). The region spanning 347-585 is the ABC transporter domain; it reads LVFERVGFRY…NGLYAGLHRI (239 aa). 381 to 388 lines the ATP pocket; sequence GPSGSGKT.

This sequence belongs to the ABC transporter superfamily. Lipid exporter (TC 3.A.1.106) family. In terms of assembly, homodimer.

Its subcellular location is the cell inner membrane. It catalyses the reaction ATP + H2O + lipid A-core oligosaccharideSide 1 = ADP + phosphate + lipid A-core oligosaccharideSide 2.. Functionally, involved in lipopolysaccharide (LPS) biosynthesis. Translocates lipid A-core from the inner to the outer leaflet of the inner membrane. Transmembrane domains (TMD) form a pore in the inner membrane and the ATP-binding domain (NBD) is responsible for energy generation. The chain is ATP-dependent lipid A-core flippase from Cupriavidus pinatubonensis (strain JMP 134 / LMG 1197) (Cupriavidus necator (strain JMP 134)).